Consider the following 969-residue polypeptide: Aspartic protease 5 (969 aa).

A signal peptide spans 1–22 (MEAGAMGGSSFLSFSSGPSAET). The segment covering 1 to 45 (MEAGAMGGSSFLSFSSGPSAETSPSSLSPPTSSSPSPSPQLVSDS) has biased composition (low complexity). 5 disordered regions span residues 1-65 (MEAG…SSRT), 79-104 (ENEA…AGHL), 128-149 (SSAT…RSSS), 173-193 (SSSS…SACG), and 311-382 (FLSL…DLPR). The Lumenal segment spans residues 23–820 (SPSSLSPPTS…PEGLPLSPQQ (798 aa)). The segment covering 311 to 324 (FLSLSSSPRSLASD) has biased composition (low complexity). Positions 335–355 (QSREQRGEREGERQRPDKGEE) are enriched in basic and acidic residues. The region spanning 413–758 (YFLDILVGTP…DREQDRVGFA (346 aa)) is the Peptidase A1 domain. Asp431 is a catalytic residue. The tract at residues 608 to 635 (PPESESTPATEALRPVAGESASRRISEK) is disordered. The active site involves Asp682. Positions 768–794 (DQRPRGPDSGDGPKGRPTAPFTVPPLR) are disordered. The segment covering 769-781 (QRPRGPDSGDGPK) has biased composition (basic and acidic residues). A helical membrane pass occupies residues 821 to 841 (LWVAAALVVVAILIAVTVILL). Residues 842–969 (HTIKRPSRSS…TLLDLPLGGE (128 aa)) are Cytoplasmic-facing. Residues 922–969 (EDDGDFFGDDSVPSAEEQETAPSLSLREESSPFSASQSTLLDLPLGGE) are disordered. Residues 952-961 (SPFSASQSTL) show a composition bias toward polar residues.

The protein belongs to the peptidase A1 family. Post-translationally, may be auto-cleaved to produce a 55 kDa form.

The protein resides in the golgi apparatus membrane. Functionally, in tachyzoites, plays an essential role in the export of several dense granule proteins into the host cell by cleaving the localization motif RRLxx (termed Toxoplasma export element (TEXEL)) located downstream of the N-terminal secretory signal sequence. However, can also regulate the export of proteins that lack the TEXEL motif, such as GRA24. Requires Arg at P3 and P2, and Leu at P1 in the substrate TEXEL motif and, specifically, cleaves after Leu. Cleaves GRA16; proteolytic cleavage is essential for the correct trafficking of GRA16 from the parasite into the infected host nucleus. Cleaves GRA19 and GRA20. Cleaves MYR1. Cleaves LCAT, GRA44, GRA46, GRA46, ROP35/WNG1 and ROP34/WNG2. By regulating the export of dense granule proteins into the host cell, regulates multiple processes during tachyzoite infection of host cells, including recruitment of host mitochondria to the parasitophorous vacuole (PV), formation of the nanotubular network (NTN) or intravacuolar network (IVN) which are membranous tubules that bud from the PV membrane into the vacuolar lumen and, up-regulation of host cell genes to facilitate the parasite infection and modulate the host innate immune response. At the bradyzoite stage, also involved in the formation of the cyst wall. This Toxoplasma gondii protein is Aspartic protease 5.